A 675-amino-acid polypeptide reads, in one-letter code: PTS system glucose-specific EIICBA component (675 aa).

Residues 3 to 414 form the PTS EIIC type-1 domain; that stretch reads KKFFGQLQRI…FNFKTPGRED (412 aa). 11 helical membrane passes run 16-36, 63-83, 89-109, 126-146, 170-190, 199-219, 273-293, 303-323, 329-349, 355-375, and 383-403; these read LMLP…GNAF, AGGI…AIGL, VAAI…GMFL, VLGI…GALA, FVPI…AIIW, AFSE…FGFI, FMQG…LAIY, VVAG…ITEP, LFVA…SFLI, LHLG…GILP, and VIPV…FLIV. The 82-residue stretch at 425–506 folds into the PTS EIIB type-1 domain; it reads SELPFKVLDA…QQIMDGKITS (82 aa). Cys-447 functions as the Phosphocysteine intermediate; for EIIB activity in the catalytic mechanism. In terms of domain architecture, PTS EIIA type-1 spans 547 to 651; that stretch reads DKVFSEKMMG…STITPIVVTN (105 aa). The active-site Tele-phosphohistidine intermediate; for EIIA activity is His-599.

It is found in the cell membrane. It carries out the reaction N(pros)-phospho-L-histidyl-[protein] + D-glucose(out) = D-glucose 6-phosphate(in) + L-histidyl-[protein]. Its activity is regulated as follows. Inhibited by 2-deoxyglucose and methyl beta-D-glucoside, but not by methyl alpha-D-glucoside, p-nitrophenyl alpha-D-glucoside, o-nitrophenyl beta-D-glucoside and salicin. Its function is as follows. The phosphoenolpyruvate-dependent sugar phosphotransferase system (sugar PTS), a major carbohydrate active transport system, catalyzes the phosphorylation of incoming sugar substrates concomitantly with their translocation across the cell membrane. This system is involved in glucose transport. Cannot transport galactose, fructose, mannose, cellobiose, sucrose, maltose, lactose, melibiose and trehalose, as well as N-acetylglucosamine. The polypeptide is PTS system glucose-specific EIICBA component (ptsG) (Staphylococcus carnosus (strain TM300)).